The primary structure comprises 80 residues: Putative membrane protein insertion efficiency factor (80 aa).

The interval 61–80 is disordered; that stretch reads KTGKDPVPDHFSLKRNQEGE. Basic and acidic residues predominate over residues 62–80; sequence TGKDPVPDHFSLKRNQEGE.

The protein belongs to the UPF0161 family.

Its subcellular location is the cell membrane. Could be involved in insertion of integral membrane proteins into the membrane. In Streptococcus pneumoniae serotype 19F (strain G54), this protein is Putative membrane protein insertion efficiency factor.